Consider the following 195-residue polypeptide: Imidazoleglycerol-phosphate dehydratase (195 aa).

The protein belongs to the imidazoleglycerol-phosphate dehydratase family.

It localises to the cytoplasm. The catalysed reaction is D-erythro-1-(imidazol-4-yl)glycerol 3-phosphate = 3-(imidazol-4-yl)-2-oxopropyl phosphate + H2O. Its pathway is amino-acid biosynthesis; L-histidine biosynthesis; L-histidine from 5-phospho-alpha-D-ribose 1-diphosphate: step 6/9. This is Imidazoleglycerol-phosphate dehydratase from Nitrosomonas eutropha (strain DSM 101675 / C91 / Nm57).